Consider the following 104-residue polypeptide: Large ribosomal subunit protein uL24 (104 aa).

The disordered stretch occupies residues isoleucine 41–lysine 61.

Belongs to the universal ribosomal protein uL24 family. In terms of assembly, part of the 50S ribosomal subunit.

Its function is as follows. One of two assembly initiator proteins, it binds directly to the 5'-end of the 23S rRNA, where it nucleates assembly of the 50S subunit. In terms of biological role, one of the proteins that surrounds the polypeptide exit tunnel on the outside of the subunit. The protein is Large ribosomal subunit protein uL24 of Wigglesworthia glossinidia brevipalpis.